Consider the following 232-residue polypeptide: 7-cyano-7-deazaguanine synthase (232 aa).

An ATP-binding site is contributed by 7 to 17 (CSGGLDSVSLA). The Zn(2+) site is built by cysteine 185, cysteine 193, cysteine 196, and cysteine 199.

The protein belongs to the QueC family. Zn(2+) serves as cofactor.

The enzyme catalyses 7-carboxy-7-deazaguanine + NH4(+) + ATP = 7-cyano-7-deazaguanine + ADP + phosphate + H2O + H(+). It participates in purine metabolism; 7-cyano-7-deazaguanine biosynthesis. In terms of biological role, catalyzes the ATP-dependent conversion of 7-carboxy-7-deazaguanine (CDG) to 7-cyano-7-deazaguanine (preQ(0)). In Brucella anthropi (strain ATCC 49188 / DSM 6882 / CCUG 24695 / JCM 21032 / LMG 3331 / NBRC 15819 / NCTC 12168 / Alc 37) (Ochrobactrum anthropi), this protein is 7-cyano-7-deazaguanine synthase.